Here is an 89-residue protein sequence, read N- to C-terminus: Small ribosomal subunit protein uS15 (89 aa).

The protein belongs to the universal ribosomal protein uS15 family. In terms of assembly, part of the 30S ribosomal subunit. Forms a bridge to the 50S subunit in the 70S ribosome, contacting the 23S rRNA.

In terms of biological role, one of the primary rRNA binding proteins, it binds directly to 16S rRNA where it helps nucleate assembly of the platform of the 30S subunit by binding and bridging several RNA helices of the 16S rRNA. Functionally, forms an intersubunit bridge (bridge B4) with the 23S rRNA of the 50S subunit in the ribosome. This is Small ribosomal subunit protein uS15 from Gluconacetobacter diazotrophicus (strain ATCC 49037 / DSM 5601 / CCUG 37298 / CIP 103539 / LMG 7603 / PAl5).